Consider the following 161-residue polypeptide: Protein-lysine N-methyltransferase (161 aa).

Residues D34 to G40 carry the DxGxGxG SAM-binding motif motif.

This sequence belongs to the class I-like SAM-binding methyltransferase superfamily. As to quaternary structure, monomer.

It carries out the reaction L-lysyl-[protein] + S-adenosyl-L-methionine = N(6)-methyl-L-lysyl-[protein] + S-adenosyl-L-homocysteine + H(+). Functionally, catalyzes the methylation of lysine residues in target proteins, using S-adenosyl-L-methionine (SAM) as the methyl donor. Exhibits broad substrate specificity, being able to methylate the crenarchaeal chromatin protein Cren7 primarily at 'Lys-11', 'Lys-16' and 'Lys-31', as well as a number of recombinant Sulfolobus proteins in vitro. Methylates lysine residues in a rather sequence-independent manner. In Saccharolobus islandicus (strain REY15A) (Sulfolobus islandicus), this protein is Protein-lysine N-methyltransferase.